A 139-amino-acid chain; its full sequence is D-ribose pyranase (139 aa).

H20 acts as the Proton donor in catalysis. Residues D28, H106, and Y128 to N130 contribute to the substrate site.

The protein belongs to the RbsD / FucU family. RbsD subfamily. In terms of assembly, homodecamer.

The protein localises to the cytoplasm. It carries out the reaction beta-D-ribopyranose = beta-D-ribofuranose. Its pathway is carbohydrate metabolism; D-ribose degradation; D-ribose 5-phosphate from beta-D-ribopyranose: step 1/2. Its function is as follows. Catalyzes the interconversion of beta-pyran and beta-furan forms of D-ribose. The chain is D-ribose pyranase from Escherichia coli O6:H1 (strain CFT073 / ATCC 700928 / UPEC).